Reading from the N-terminus, the 610-residue chain is ABC transporter ATP-binding protein/permease wht-3 (610 aa).

An ABC transporter domain is found at 42 to 277 (VKTRKKLFSK…FADCGHPIPK (236 aa)). An ATP-binding site is contributed by 74–81 (GASGAGKT). 5 helical membrane-spanning segments follow: residues 396-416 (ALYFLIAELTFSTMFGIMTFM), 446-466 (LPLFTIDGALMIVISYWMIGL), 477-497 (ILISVLVEQSATSCGLFLACL), 503-523 (LAIAFAVPASGLFALLSGLYG), and 584-604 (VIGLCSIVIFFYLAGYIALFI).

Belongs to the ABC transporter superfamily. ABCG family. Eye pigment precursor importer (TC 3.A.1.204) subfamily.

The protein resides in the membrane. Its function is as follows. Required for efficient RNA interference (RNAi) of pop-1 indicating a role in the germline development. This is ABC transporter ATP-binding protein/permease wht-3 (wht-3) from Caenorhabditis elegans.